The primary structure comprises 146 residues: Hemoglobin subunit beta (146 aa).

Residues H2–H146 enclose the Globin domain. H63 and H92 together coordinate heme b.

This sequence belongs to the globin family. In terms of assembly, heterotetramer of two alpha chains and two beta chains. As to expression, red blood cells.

Functionally, involved in oxygen transport from the lung to the various peripheral tissues. This is Hemoglobin subunit beta (HBB) from Aquila chrysaetos (Golden eagle).